The primary structure comprises 452 residues: UDP-N-acetylmuramoylalanine--D-glutamate ligase (452 aa).

115 to 121 (GTNGKTT) is an ATP binding site.

It belongs to the MurCDEF family.

The protein resides in the cytoplasm. The catalysed reaction is UDP-N-acetyl-alpha-D-muramoyl-L-alanine + D-glutamate + ATP = UDP-N-acetyl-alpha-D-muramoyl-L-alanyl-D-glutamate + ADP + phosphate + H(+). It participates in cell wall biogenesis; peptidoglycan biosynthesis. Cell wall formation. Catalyzes the addition of glutamate to the nucleotide precursor UDP-N-acetylmuramoyl-L-alanine (UMA). This is UDP-N-acetylmuramoylalanine--D-glutamate ligase from Geobacter sp. (strain M21).